Reading from the N-terminus, the 527-residue chain is Pentatricopeptide repeat-containing protein At4g25270, chloroplastic (527 aa).

A chloroplast-targeting transit peptide spans Met1–Leu47. The tract at residues Ser12–Phe44 is disordered. Over residues Met21–Arg35 the composition is skewed to basic residues. PPR repeat units follow at residues Asn126 to Arg156, Ser159 to Pro193, Asp194 to Tyr228, Asp229 to Lys259, Asp260 to Pro294, Asp295 to Trp326, Glu327 to Ser361, Ser367 to Pro389, Asp390 to Pro425, and Lys426 to Glu457. The segment at Val462–Thr527 is type E motif; degenerate.

Belongs to the PPR family. PCMP-E subfamily.

Its subcellular location is the plastid. It is found in the chloroplast. The chain is Pentatricopeptide repeat-containing protein At4g25270, chloroplastic (PCMP-E53) from Arabidopsis thaliana (Mouse-ear cress).